We begin with the raw amino-acid sequence, 528 residues long: Protein DA1-related 2 (528 aa).

Positions 60–108 are disordered; it reads SNGGGSGAHTNHHPPQFQEDENMVFPLPPSSLDDRSRGARDKEELDRSI. Basic and acidic residues predominate over residues 91 to 106; sequence LDDRSRGARDKEELDR. Positions 99–118 constitute a UIM 1 domain; the sequence is RDKEELDRSISLSLADNTKR. The UIM 2; degenerate domain maps to 127-148; the sequence is DNNRDFPRPFHGGLNPSSFIPP. Residues 160-220 form the LIM zinc-binding domain; that stretch reads RICGGCNSDI…KLCFKELTHP (61 aa). The tract at residues 447–474 is disordered; sequence DPSTRNLPSTSSVATSSSSSFSNKKGGK. Residues 455-470 show a composition bias toward low complexity; the sequence is STSSVATSSSSSFSNK.

Interacts with ubiquitin, TCP14 and TCP15. In terms of processing, polyubiquitinated by DA2. As to expression, expressed in the vasculature of leaves, inflorescence stems, flowers, hypocotyls, and primary and lateral roots. In roots, expressed in phloem companion cells.

Functionally, acts redundantly with DA1 and DAR1 to regulate endoreduplication during leaf development. Together with DA1 and DAR1, modulates the protein stability of the transcription factors TCP14 and TCP15, which repress endoreduplication by directly regulating the expression of cell-cycle genes. Involved in root phloem development. Is an essential component of early phloem development, long-distance delivery of phloem content, and proper maintenance of root system architecture. Involved in the control of root meristem size. Functions genetically downstream of cytokinin and IAA3 to maintain normal auxin distribution by influencing polar auxin transport. Acts through the PLETHORA pathway, upstream of PLT1 and PLT2 to influence root stem cell niche activity and thus control root meristem size. The polypeptide is Protein DA1-related 2 (Arabidopsis thaliana (Mouse-ear cress)).